A 253-amino-acid polypeptide reads, in one-letter code: Glucosamine-6-phosphate deaminase (253 aa).

The active-site Proton acceptor; for enolization step is the Asp-65. Asn-133 functions as the For ring-opening step in the catalytic mechanism. His-135 acts as the Proton acceptor; for ring-opening step in catalysis. The active-site For ring-opening step is Glu-140.

Belongs to the glucosamine/galactosamine-6-phosphate isomerase family. NagB subfamily.

It carries out the reaction alpha-D-glucosamine 6-phosphate + H2O = beta-D-fructose 6-phosphate + NH4(+). Its pathway is amino-sugar metabolism; N-acetylneuraminate degradation; D-fructose 6-phosphate from N-acetylneuraminate: step 5/5. In terms of biological role, catalyzes the reversible isomerization-deamination of glucosamine 6-phosphate (GlcN6P) to form fructose 6-phosphate (Fru6P) and ammonium ion. The polypeptide is Glucosamine-6-phosphate deaminase (Corynebacterium efficiens (strain DSM 44549 / YS-314 / AJ 12310 / JCM 11189 / NBRC 100395)).